We begin with the raw amino-acid sequence, 264 residues long: Major prion protein (264 aa).

A signal peptide spans 1-24 (MVKSHIGSWILVLFVAMWSDVGLC). Residues 25-241 (KKRPKPGGGW…ESQAYYQRGA (217 aa)) are interaction with GRB2, ERI3 and SYN1. The tract at residues 28–118 (PKPGGGWNTG…QWNKPSKPKT (91 aa)) is disordered. Positions 37 to 54 (GGSRYPGPGSPGGNRYPP) are enriched in low complexity. 6 tandem repeats follow at residues 54–62 (PQGGGGWGQ), 63–70 (PHGGGWGQ), 71–78 (PHGGGWGQ), 79–86 (PHGGGWGQ), 87–94 (PHGGGWGQ), and 95–103 (PHGGGGWGQ). Residues 54–103 (PQGGGGWGQPHGGGWGQPHGGGWGQPHGGGWGQPHGGGWGQPHGGGGWGQ) form a 6 X 8 AA tandem repeats of P-H-G-G-G-W-G-Q region. Residues 55–107 (QGGGGWGQPHGGGWGQPHGGGWGQPHGGGWGQPHGGGWGQPHGGGGWGQGGTH) show a composition bias toward gly residues. Residues histidine 72, glycine 73, glycine 74, histidine 80, glycine 81, glycine 82, histidine 88, glycine 89, glycine 90, histidine 96, and glycine 98 each contribute to the Cu(2+) site. A disulfide bond links cysteine 190 and cysteine 225. Asparagine 192 and asparagine 208 each carry an N-linked (GlcNAc...) asparagine glycan. The GPI-anchor amidated alanine moiety is linked to residue alanine 241. A propeptide spans 242 to 264 (SVILFSSPPVILLISFLIFLIVG) (removed in mature form).

This sequence belongs to the prion family. In terms of assembly, monomer and homodimer. Has a tendency to aggregate into amyloid fibrils containing a cross-beta spine, formed by a steric zipper of superposed beta-strands. Soluble oligomers may represent an intermediate stage on the path to fibril formation. Copper binding may promote oligomerization. Interacts with GRB2, APP, ERI3/PRNPIP and SYN1. Mislocalized cytosolically exposed PrP interacts with MGRN1; this interaction alters MGRN1 subcellular location and causes lysosomal enlargement. Interacts with KIAA1191.

The protein resides in the cell membrane. It localises to the golgi apparatus. Functionally, its primary physiological function is unclear. Has cytoprotective activity against internal or environmental stresses. May play a role in neuronal development and synaptic plasticity. May be required for neuronal myelin sheath maintenance. May play a role in iron uptake and iron homeostasis. Soluble oligomers are toxic to cultured neuroblastoma cells and induce apoptosis (in vitro). Association with GPC1 (via its heparan sulfate chains) targets PRNP to lipid rafts. Also provides Cu(2+) or Zn(2+) for the ascorbate-mediated GPC1 deaminase degradation of its heparan sulfate side chains. The polypeptide is Major prion protein (PRNP) (Ailuropoda melanoleuca (Giant panda)).